The following is a 312-amino-acid chain: Olfactory receptor 867 (312 aa).

The Extracellular portion of the chain corresponds to 1–6 (MILNCN). The helical transmembrane segment at 7-30 (PFSGLFLSMYLVTVLGNLLIILAV) threads the bilayer. Over 31–38 (SSNSHLHN) the chain is Cytoplasmic. The helical transmembrane segment at 39–60 (LMYFFLSNLSFVDICFISTTIP) threads the bilayer. Over 61–81 (KMLVNIHSQTKDISYIECLSQ) the chain is Extracellular. Cysteine 78 and cysteine 160 form a disulfide bridge. A helical transmembrane segment spans residues 82 to 101 (VYFLTTFGGMDNFLLTLMAC). The Cytoplasmic segment spans residues 102 to 120 (DRYVAICHPLNYTVIMNLQ). A helical transmembrane segment spans residues 121 to 139 (LCALLILMFWLIMFCVSLI). Over 140 to 177 (HVLLMNELNFSRGTEIPHFFCELAQVLKVANSDTHINN) the chain is Extracellular. Residue asparagine 148 is glycosylated (N-linked (GlcNAc...) asparagine). The helical transmembrane segment at 178 to 200 (VFMYVVTSLLGLIPMTGILMSYS) threads the bilayer. Residues 201-217 (QIASSLLKMSSSVSKYK) are Cytoplasmic-facing. Residues 218–241 (AFSTCGSHLCVVSLFYGSATIVYF) form a helical membrane-spanning segment. Residues 242 to 253 (CSSVLHSTHKKM) lie on the Extracellular side of the membrane. The helical transmembrane segment at 254-273 (IASLMYTVISPMLNPFIYSL) threads the bilayer. The Cytoplasmic portion of the chain corresponds to 274 to 312 (RNKDVKGALGKLFIRVASCPLWSKDFRPKFILKPERQSL).

This sequence belongs to the G-protein coupled receptor 1 family. Epithelium of the tongue; including the taste buds.

Its subcellular location is the cell membrane. Possible olfactory or taste receptor. The sequence is that of Olfactory receptor 867 (Olr867) from Rattus norvegicus (Rat).